Here is a 455-residue protein sequence, read N- to C-terminus: Argininosuccinate lyase (455 aa).

This sequence belongs to the lyase 1 family. Argininosuccinate lyase subfamily.

The protein localises to the cytoplasm. The enzyme catalyses 2-(N(omega)-L-arginino)succinate = fumarate + L-arginine. Its pathway is amino-acid biosynthesis; L-arginine biosynthesis; L-arginine from L-ornithine and carbamoyl phosphate: step 3/3. This chain is Argininosuccinate lyase, found in Shewanella baltica (strain OS185).